The sequence spans 262 residues: Acyl-[acyl-carrier-protein]--UDP-N-acetylglucosamine O-acyltransferase (262 aa).

This sequence belongs to the transferase hexapeptide repeat family. LpxA subfamily. In terms of assembly, homotrimer.

It localises to the cytoplasm. It catalyses the reaction a (3R)-hydroxyacyl-[ACP] + UDP-N-acetyl-alpha-D-glucosamine = a UDP-3-O-[(3R)-3-hydroxyacyl]-N-acetyl-alpha-D-glucosamine + holo-[ACP]. The protein operates within glycolipid biosynthesis; lipid IV(A) biosynthesis; lipid IV(A) from (3R)-3-hydroxytetradecanoyl-[acyl-carrier-protein] and UDP-N-acetyl-alpha-D-glucosamine: step 1/6. In terms of biological role, involved in the biosynthesis of lipid A, a phosphorylated glycolipid that anchors the lipopolysaccharide to the outer membrane of the cell. The sequence is that of Acyl-[acyl-carrier-protein]--UDP-N-acetylglucosamine O-acyltransferase from Herminiimonas arsenicoxydans.